Consider the following 166-residue polypeptide: Testis-expressed protein 51 (166 aa).

Positions 1-15 (MLPLLIICLLPAIEG) are cleaved as a signal peptide. A helical transmembrane segment spans residues 138 to 154 (SLWAVSLSSALLLAIAG).

It is found in the membrane. The polypeptide is Testis-expressed protein 51 (Homo sapiens (Human)).